The following is a 51-amino-acid chain: Small ribosomal subunit protein eS31 (51 aa).

C22, C25, C40, and C43 together coordinate Zn(2+). The C4-type zinc-finger motif lies at 22 to 43 (CVRCSHGIFMADHGDRYACGRC).

This sequence belongs to the eukaryotic ribosomal protein eS31 family. In terms of assembly, part of the 30S ribosomal subunit. Requires Zn(2+) as cofactor.

The chain is Small ribosomal subunit protein eS31 from Methanosphaera stadtmanae (strain ATCC 43021 / DSM 3091 / JCM 11832 / MCB-3).